Reading from the N-terminus, the 303-residue chain is N-acetylmuramic acid 6-phosphate etherase (303 aa).

Residues 62–225 (IVAAFRQGGR…TTASMVLLGK (164 aa)) enclose the SIS domain. Glu90 serves as the catalytic Proton donor. Glu121 is an active-site residue.

It belongs to the GCKR-like family. MurNAc-6-P etherase subfamily. Homodimer.

The catalysed reaction is N-acetyl-D-muramate 6-phosphate + H2O = N-acetyl-D-glucosamine 6-phosphate + (R)-lactate. The protein operates within amino-sugar metabolism; 1,6-anhydro-N-acetylmuramate degradation. Its pathway is amino-sugar metabolism; N-acetylmuramate degradation. It functions in the pathway cell wall biogenesis; peptidoglycan recycling. In terms of biological role, specifically catalyzes the cleavage of the D-lactyl ether substituent of MurNAc 6-phosphate, producing GlcNAc 6-phosphate and D-lactate. Together with AnmK, is also required for the utilization of anhydro-N-acetylmuramic acid (anhMurNAc) either imported from the medium or derived from its own cell wall murein, and thus plays a role in cell wall recycling. The chain is N-acetylmuramic acid 6-phosphate etherase from Histophilus somni (strain 129Pt) (Haemophilus somnus).